The primary structure comprises 70 residues: Putative membrane protein insertion efficiency factor (70 aa).

The protein belongs to the UPF0161 family.

The protein resides in the cell inner membrane. In terms of biological role, could be involved in insertion of integral membrane proteins into the membrane. The chain is Putative membrane protein insertion efficiency factor from Sphingopyxis alaskensis (strain DSM 13593 / LMG 18877 / RB2256) (Sphingomonas alaskensis).